Reading from the N-terminus, the 84-residue chain is Exodeoxyribonuclease 7 small subunit (84 aa).

This sequence belongs to the XseB family. In terms of assembly, heterooligomer composed of large and small subunits.

Its subcellular location is the cytoplasm. It catalyses the reaction Exonucleolytic cleavage in either 5'- to 3'- or 3'- to 5'-direction to yield nucleoside 5'-phosphates.. Functionally, bidirectionally degrades single-stranded DNA into large acid-insoluble oligonucleotides, which are then degraded further into small acid-soluble oligonucleotides. The polypeptide is Exodeoxyribonuclease 7 small subunit (Haemophilus influenzae (strain ATCC 51907 / DSM 11121 / KW20 / Rd)).